The primary structure comprises 486 residues: MSYYPYYQTENSDYSSFNSLMADICEPSPSSSSSRKRPADSENGNSAKMPVVIPMQPVQNFTMQYPIDNGWQNFNMIHQVYNNNNMNQPGYGWVGQPPPMPQDFYKARPGQTVTPPMNEFHNAHGTQQTPNDNSGNLPISSVMYTPESDLSTTSANFTPDWNTTTNGPCNQEKRNKENLFPNDDTSSGKLFDYFLTNTERENESENNIPHPYNKAVFPTFGVPVSSDGNVVAEVVDGRLPAVGTRSKYDLTVDELRRRCGAPEHMNQSALYCFFRKSKKKEAINRVKKVLTDYNITVRTMQRQRKVTCFSPFLEEEATALARDLDSITEEFLPIDAIALEMLEKLIFNNKNLDICLRILKNTNKTITRVIKTLEVRQPKITGQKEKLKGNSLDLSYHNFSLTTHGFGHPNSLSHYRSYQKIVEQAALYCEKMQKGASLPSKEYLIPGQKPFENMSNEFFVEWRMRSYHKKARKEMLDFNQAYSRSS.

Disordered regions lie at residues 25–49 (CEPSPSSSSSRKRPADSENGNSAKM) and 150–173 (LSTTSANFTPDWNTTTNGPCNQEK). Residues 150 to 169 (LSTTSANFTPDWNTTTNGPC) are compositionally biased toward polar residues. Residues 301 to 430 (QRQRKVTCFS…IVEQAALYCE (130 aa)) are H-S-H (helix-span-helix), dimerization.

Belongs to the AP-2 family. In terms of assembly, binds DNA as a dimer.

The protein localises to the nucleus. Functionally, sequence-specific DNA-binding protein that interacts with enhancer elements to regulate transcription of selected genes. Required for neuroblast and epidermal morphogenesis, perhaps acting in cooperation with transcription factor aptf-2. This is Transcription factor aptf-4 from Caenorhabditis elegans.